The primary structure comprises 477 residues: Pup--protein ligase (477 aa).

Position 16 (glutamate 16) interacts with Mg(2+). Position 60 (arginine 60) interacts with ATP. Tyrosine 62 contacts Mg(2+). Aspartate 64 serves as the catalytic Proton acceptor. Position 70 (glutamate 70) interacts with Mg(2+). ATP is bound by residues threonine 73 and tryptophan 441.

It belongs to the Pup ligase/Pup deamidase family. Pup-conjugating enzyme subfamily.

It catalyses the reaction ATP + [prokaryotic ubiquitin-like protein]-L-glutamate + [protein]-L-lysine = ADP + phosphate + N(6)-([prokaryotic ubiquitin-like protein]-gamma-L-glutamyl)-[protein]-L-lysine.. The protein operates within protein degradation; proteasomal Pup-dependent pathway. Its pathway is protein modification; protein pupylation. Catalyzes the covalent attachment of the prokaryotic ubiquitin-like protein modifier Pup to the proteasomal substrate proteins, thereby targeting them for proteasomal degradation. This tagging system is termed pupylation. The ligation reaction involves the side-chain carboxylate of the C-terminal glutamate of Pup and the side-chain amino group of a substrate lysine. This chain is Pup--protein ligase, found in Corynebacterium kroppenstedtii (strain DSM 44385 / JCM 11950 / CIP 105744 / CCUG 35717).